A 398-amino-acid polypeptide reads, in one-letter code: Mannitol-1-phosphate 5-dehydrogenase (398 aa).

10 to 21 (AVHFGAGNIGRG) contacts NAD(+). Lys-221 is a catalytic residue.

Belongs to the mannitol dehydrogenase family. Monomer.

It catalyses the reaction D-mannitol 1-phosphate + NAD(+) = beta-D-fructose 6-phosphate + NADH + H(+). Functionally, catalyzes the NAD(H)-dependent interconversion of D-fructose 6-phosphate and D-mannitol 1-phosphate in the mannitol metabolic pathway. This chain is Mannitol-1-phosphate 5-dehydrogenase, found in Chaetomium globosum (strain ATCC 6205 / CBS 148.51 / DSM 1962 / NBRC 6347 / NRRL 1970) (Soil fungus).